Reading from the N-terminus, the 836-residue chain is DNA gyrase subunit A (836 aa).

A Topo IIA-type catalytic domain is found at Leu-34–Ile-500. Tyr-122 acts as the O-(5'-phospho-DNA)-tyrosine intermediate in catalysis. A GyrA-box motif is present at residues Gln-527–Gly-533.

The protein belongs to the type II topoisomerase GyrA/ParC subunit family. Heterotetramer, composed of two GyrA and two GyrB chains. In the heterotetramer, GyrA contains the active site tyrosine that forms a transient covalent intermediate with DNA, while GyrB binds cofactors and catalyzes ATP hydrolysis.

It is found in the cytoplasm. It carries out the reaction ATP-dependent breakage, passage and rejoining of double-stranded DNA.. Functionally, a type II topoisomerase that negatively supercoils closed circular double-stranded (ds) DNA in an ATP-dependent manner to modulate DNA topology and maintain chromosomes in an underwound state. Negative supercoiling favors strand separation, and DNA replication, transcription, recombination and repair, all of which involve strand separation. Also able to catalyze the interconversion of other topological isomers of dsDNA rings, including catenanes and knotted rings. Type II topoisomerases break and join 2 DNA strands simultaneously in an ATP-dependent manner. This chain is DNA gyrase subunit A, found in Chlamydia trachomatis serovar D (strain ATCC VR-885 / DSM 19411 / UW-3/Cx).